The sequence spans 1300 residues: MSIYQEFVNKYSLSKTLRFELIPQGKTLENIKARGLILDDEKRAKDYKKAKQIIDKYHQFFIEEILSSVCISEDLLQNYSDVYFKLKKSDDDNLQKDFKSAKDTIKKQISEYIKDSEKFKNLFNQNLIDAKKGQESDLILWLKQSKDNGIELFKANSDITDIDEALEIIKSFKGWTTYFKGFHENRKNVYSSNDIPTSIIYRIVDDNLPKFLENKAKYESLKDKAPEAINYEQIKKDLAEELTFDIDYKTSEVNQRVFSLDEVFEIANFNNYLNQSGITKFNTIIGGKFVNGENTKRKGINEYINLYSQQINDKTLKKYKMSVLFKQILSDTESKSFVIDKLEDDSDVVTTMQSFYEQIAAFKTVEEKSIKETLSLLFDDLKAQKLDLSKIYFKNDKSLTDLSQQVFDDYSVIGTAVLEYITQQIAPKNLDNPSKKEQELIAKKTEKAKYLSLETIKLALEEFNKHRDIDKQCRFEEILANFAAIPMIFDEIAQNKDNLAQISIKYQNQGKKDLLQASAEDDVKAIKDLLDQTNNLLHKLKIFHISQSEDKANILDKDEHFYLVFEECYFELANIVPLYNKIRNYITQKPYSDEKFKLNFENSTLANGWDKNKEPDNTAILFIKDDKYYLGVMNKKNNKIFDDKAIKENKGEGYKKIVYKLLPGANKMLPKVFFSAKSIKFYNPSEDILRIRNHSTHTKNGSPQKGYEKFEFNIEDCRKFIDFYKQSISKHPEWKDFGFRFSDTQRYNSIDEFYREVENQGYKLTFENISESYIDSVVNQGKLYLFQIYNKDFSAYSKGRPNLHTLYWKALFDERNLQDVVYKLNGEAELFYRKQSIPKKITHPAKEAIANKNKDNPKKESVFEYDLIKDKRFTEDKFFFHCPITINFKSSGANKFNDEINLLLKEKANDVHILSIDRGERHLAYYTLVDGKGNIIKQDTFNIIGNDRMKTNYHDKLAAIEKDRDSARKDWKKINNIKEMKEGYLSQVVHEIAKLVIEYNAIVVFEDLNFGFKRGRFKVEKQVYQKLEKMLIEKLNYLVFKDNEFDKTGGVLRAYQLTAPFETFKKMGKQTGIIYYVPAGFTSKICPVTGFVNQLYPKYESVSKSQEFFSKFDKICYNLDKGYFEFSFDYKNFGDKAAKGKWTIASFGSRLINFRNSDKNHNWDTREVYPTKELEKLLKDYSIEYGHGECIKAAICGESDKKFFAKLTSVLNTILQMRNSKTGTELDYLISPVADVNGNFFDSRQAPKNMPQDADANGAYHIGLKGLMLLGRIKNNQEGKKLNLVIKNEEYFEFVQNRNN.

The wedge region 1 stretch occupies residues 1–24 (MSIYQEFVNKYSLSKTLRFELIPQ). Recognition domain regions lie at residues 25-339 (GKTL…SFVI) and 340-591 (DKLE…QKPY). Binds crRNA alone and in crRNA-target DNA heteroduplex stretches follow at residues 47 to 51 (YKKAK) and 182 to 186 (FHENR). Residues 301–305 (NEYIN) form a binds DNA in crRNA-target DNA heteroduplex region. Binds crRNA in crRNA-target DNA heteroduplex stretches follow at residues 326–329 (KQIL) and 538–541 (HKLK). A binds crRNA region spans residues 591–595 (YSDEK). A wedge region 2 region spans residues 592–662 (SDEKFKLNFE…GYKKIVYKLL (71 aa)). An LKL, important for PAM recognition and DNA unwinding region spans residues 662-679 (LPGANKMLPKVFFSAKSI). Residues 663–762 (PGANKMLPKV…FYREVENQGY (100 aa)) form a PAM-interacting domain (PI) region. The tract at residues 671–677 (KVFFSAK) is binds DNA protospacer adjacent motif (PAM) on target DNA. The tract at residues 692–704 (RNHSTHTKNGSPQ) is binds single-strand non-target DNA. The interval 763 to 892 (KLTFENISES…PITINFKSSG (130 aa)) is wedge region 3. Binds crRNA regions lie at residues 791 to 794 (KDFS) and 803 to 804 (LH). Catalysis depends on for pre-crRNA processing residues His-843, Lys-852, and Lys-869. Binds crRNA regions lie at residues 851–853 (NKN) and 865–873 (YDLIKDKRF). The segment at 893-953 (ANKFNDEINL…IGNDRMKTNY (61 aa)) is ruvC-I. Asp-917 acts as the For DNase activity of RuvC domain in catalysis. The bridge helix stretch occupies residues 954–971 (HDKLAAIEKDRDSARKDW). The ruvC-II stretch occupies residues 972-1078 (KKINNIKEMK…KQTGIIYYVP (107 aa)). The active-site For DNase activity of RuvC domain is the Glu-1006. The segment at 1079 to 1254 (AGFTSKICPV…QAPKNMPQDA (176 aa)) is nuclease domain. The active-site For DNase activity of RuvC domain is the Asp-1255. Residues 1255 to 1300 (DANGAYHIGLKGLMLLGRIKNNQEGKKLNLVIKNEEYFEFVQNRNN) form a ruvC-III region.

Belongs to the CRISPR-associated endonuclease Cas12a family. In terms of assembly, might be a homodimer. Might be a monomer. The cofactor is Ca(2+). It depends on Mg(2+) as a cofactor.

It catalyses the reaction Endonucleolytic cleavage to 5'-phosphodinucleotide and 5'-phosphooligonucleotide end-products.. The enzyme catalyses RNA = a 5'-hydroxy-ribonucleotide + n nucleoside-2',3'-cyclophosphates.. Functionally, CRISPR (clustered regularly interspaced short palindromic repeat), is an adaptive immune system that provides protection against mobile genetic elements (viruses, transposable elements and conjugative plasmids). CRISPR clusters contain sequences complementary to antecedent mobile elements and target invading nucleic acids. CRISPR clusters are transcribed and processed into CRISPR RNA (crRNA). Has endonuclease activity on pre-crRNA and dsDNA, using different active sites. A single-RNA guided endonuclease that is also capable of guiding crRNA processing; correct processing of pre-crRNA requires only this protein and the CRISPR locus. pre-crRNA processing proceeds by an intramolecular nucleophilic attack on the scissile phosphate by the 2'-OH of the upstream ribonucleotide, the divalent cation (which is bound by the crRNA) is probably required for ordering the crRNA pseudoknot and/or increasing RNA binding. RNA mutagenesis studies show pre-crRNA cleavage is highly sequence- and structure-specific. Forms a complex with crRNA and complementary dsDNA, where the crRNA displaces the non-target DNA strand and directs endonucleolytic cleavage of both strands of the DNA. Cleavage results in staggered 5-base 5' overhangs 14-18 and 21-23 bases downstream of the PAM (protospacer adjacent motif) on the non-target and target strands respectively. Both target and non-target strand DNA are probably independently cleaved in the same active site. When this protein is expressed in E.coli it prevents plasmids homologous to the first CRISPR spacer from transforming, formally showing it is responsible for plasmid immunity. The protein is CRISPR-associated endonuclease Cas12a of Francisella tularensis subsp. novicida (strain U112).